The chain runs to 190 residues: Large ribosomal subunit protein eL19 (190 aa).

Disordered regions lie at residues 56-85 (TVHSRSRARALKESKRAGRHMGYGKRKGTK) and 166-190 (NRAARERRQQRLAEKKEALFAEAAN). Over residues 72 to 83 (AGRHMGYGKRKG) the composition is skewed to basic residues. Positions 166 to 184 (NRAARERRQQRLAEKKEAL) are enriched in basic and acidic residues.

This sequence belongs to the eukaryotic ribosomal protein eL19 family. As to quaternary structure, component of the large ribosomal subunit. Mature ribosomes consist of a small (40S) and a large (60S) subunit. The 40S subunit contains about 32 different proteins and 1 molecule of RNA (18S). The 60S subunit contains 45 different proteins and 3 molecules of RNA (25S, 5.8S and 5S).

It localises to the cytoplasm. Component of the ribosome, a large ribonucleoprotein complex responsible for the synthesis of proteins in the cell. The small ribosomal subunit (SSU) binds messenger RNAs (mRNAs) and translates the encoded message by selecting cognate aminoacyl-transfer RNA (tRNA) molecules. The large subunit (LSU) contains the ribosomal catalytic site termed the peptidyl transferase center (PTC), which catalyzes the formation of peptide bonds, thereby polymerizing the amino acids delivered by tRNAs into a polypeptide chain. The nascent polypeptides leave the ribosome through a tunnel in the LSU and interact with protein factors that function in enzymatic processing, targeting, and the membrane insertion of nascent chains at the exit of the ribosomal tunnel. RPL19A may play a role in the last stages of translation initiation, in particular subunit joining and shedding/releasing factors. This is Large ribosomal subunit protein eL19 from Candida albicans (strain SC5314 / ATCC MYA-2876) (Yeast).